Reading from the N-terminus, the 1029-residue chain is Eukaryotic translation initiation factor 3 subunit A (1029 aa).

The stretch at 92–121 forms a coiled coil; sequence LKKFIELAEQKVTEAQAKADEIQSSLESAA. Positions 339–523 constitute a PCI domain; it reads MTKAASFVLL…GVLTFESDIF (185 aa). Residues 606–903 adopt a coiled-coil conformation; that stretch reads TRRAIIEKRK…EEEAEQRRAA (298 aa). Composition is skewed to basic and acidic residues over residues 621–632, 644–666, 797–901, and 913–924; these read ALQKKQREEENR, EQQR…EQDR, TEKR…EQRR, and GPAREASPERTA. Disordered stretches follow at residues 621–666 and 797–1029; these read ALQK…EQDR and TEKR…KQQQ. Over residues 943-960 the composition is skewed to low complexity; sequence AKAAASAGEQPAAAQEAT. The span at 977–993 shows a compositional bias: basic and acidic residues; the sequence is ATRDGPSDSRDLSHARE.

This sequence belongs to the eIF-3 subunit A family. Component of the eukaryotic translation initiation factor 3 (eIF-3) complex.

It localises to the cytoplasm. In terms of biological role, RNA-binding component of the eukaryotic translation initiation factor 3 (eIF-3) complex, which is involved in protein synthesis of a specialized repertoire of mRNAs and, together with other initiation factors, stimulates binding of mRNA and methionyl-tRNAi to the 40S ribosome. The eIF-3 complex specifically targets and initiates translation of a subset of mRNAs involved in cell proliferation. The sequence is that of Eukaryotic translation initiation factor 3 subunit A from Coccidioides immitis (strain RS) (Valley fever fungus).